Here is a 517-residue protein sequence, read N- to C-terminus: MVIANNPILKGFYPDPSICRKGDDFYLVCSSFVYAPGVPIFHTKDLAHFEQIGNILDRESQLPLSGDISRGIFAPTIREHNGIFYMITTNVSSGGNFIVTAKDPAGPWSEPYYLGEDEAPGIDPSLFFDDDGKCYYVGTRPNPDGVRYNGDWEIWVQELDLEQMKLVGPSMAIWKGALKDVIWPEGPHLYKKDGYYYLLHAEAGTSFEHAISVARSKELFKWFEGCPRNPIFTHRNLGKDYPVCNVGHADLVDDINGNWYMVMLASRPCKGKCSLGRETFLAKVIWEDGWPVVNPGVGRLTDEVEMDLPEYRFSKEITTKDKMTFEETVLDDRFVGIERRSEDFYSLTDNPGFLRLKLRPEAIENTGNPSYLGIRQKTHSFRASCGLKFTPAKDNECAGMVLFQNNENHLELLVVKKKDKLQFKVGPVIKGTKIRLATFDISSGDLEIILEAANQLANIYIKKNNEKILVAECIDLSPYTTEESGGFVGCTIGLYASSNGKTSDNYCDYSYFTVEEV.

Catalysis depends on Asp-15, which acts as the Proton acceptor. Glu-185 (proton donor) is an active-site residue.

This sequence belongs to the glycosyl hydrolase 43 family.

It carries out the reaction Hydrolysis of (1-&gt;4)-beta-D-xylans, to remove successive D-xylose residues from the non-reducing termini.. It catalyses the reaction Hydrolysis of terminal non-reducing alpha-L-arabinofuranoside residues in alpha-L-arabinosides.. In terms of biological role, has a 1.6-fold higher activity as an arabinosidase than as a beta-xylosidase when tested on the substrates nitrophenyl-beta-D-xylopyranoside and P-nitrophenyl-alpha-L-arabinofuranoside. The protein is Xylosidase/arabinosidase (xylB) of Butyrivibrio fibrisolvens.